The sequence spans 529 residues: Laccase-1 (529 aa).

The first 23 residues, 1–23 (MFPGARILATLTLALHLLHGTHA), serve as a signal peptide directing secretion. Plastocyanin-like domains lie at 25 to 159 (IGPT…FIVY), 170 to 312 (DVDN…ILRY), and 380 to 499 (TAPV…FAED). The N-linked (GlcNAc...) asparagine glycan is linked to Asn-57. Residues His-96, His-98, His-141, and His-143 each coordinate Cu cation. Intrachain disulfides connect Cys-117/Cys-514 and Cys-149/Cys-236. Residues Asn-239 and Asn-282 are each glycosylated (N-linked (GlcNAc...) asparagine). 7 residues coordinate Cu cation: His-425, His-428, His-430, His-481, Cys-482, His-483, and His-487.

Belongs to the multicopper oxidase family. It depends on Cu cation as a cofactor.

Its subcellular location is the secreted. The catalysed reaction is 4 hydroquinone + O2 = 4 benzosemiquinone + 2 H2O. Its function is as follows. Lignin degradation and detoxification of lignin-derived products. The chain is Laccase-1 (POX1) from Pleurotus ostreatus (Oyster mushroom).